Here is a 468-residue protein sequence, read N- to C-terminus: 6-phospho-beta-galactosidase (468 aa).

Residues Q19, H116, N159, E160, and N297 each coordinate D-galactose 6-phosphate. E160 (proton donor) is an active-site residue. E375 (nucleophile) is an active-site residue. 4 residues coordinate D-galactose 6-phosphate: S428, W429, K435, and Y437.

The protein belongs to the glycosyl hydrolase 1 family.

It catalyses the reaction a 6-phospho-beta-D-galactoside + H2O = D-galactose 6-phosphate + an alcohol. The protein operates within carbohydrate metabolism; lactose degradation; D-galactose 6-phosphate and beta-D-glucose from lactose 6-phosphate: step 1/1. This Streptococcus pyogenes serotype M1 protein is 6-phospho-beta-galactosidase.